Reading from the N-terminus, the 298-residue chain is Elongation factor Ts (298 aa).

Residues 79–82 form an involved in Mg(2+) ion dislocation from EF-Tu region; that stretch reads TDFV.

Belongs to the EF-Ts family.

The protein localises to the cytoplasm. In terms of biological role, associates with the EF-Tu.GDP complex and induces the exchange of GDP to GTP. It remains bound to the aminoacyl-tRNA.EF-Tu.GTP complex up to the GTP hydrolysis stage on the ribosome. The sequence is that of Elongation factor Ts (tsf) from Mycoplasma pneumoniae (strain ATCC 29342 / M129 / Subtype 1) (Mycoplasmoides pneumoniae).